Here is a 128-residue protein sequence, read N- to C-terminus: Nucleoside diphosphate kinase B (128 aa).

Residue Met1 is modified to N-acetylmethionine. Residues Lys9, Phe39, Thr70, Arg81, and Asn91 each coordinate ATP. Residue His94 is the Pros-phosphohistidine intermediate of the active site.

It belongs to the NDK family. The cofactor is Mg(2+).

It is found in the cytoplasm. The protein resides in the nucleus. It localises to the cell projection. Its subcellular location is the lamellipodium. The protein localises to the ruffle. It carries out the reaction a 2'-deoxyribonucleoside 5'-diphosphate + ATP = a 2'-deoxyribonucleoside 5'-triphosphate + ADP. The catalysed reaction is a ribonucleoside 5'-diphosphate + ATP = a ribonucleoside 5'-triphosphate + ADP. Its function is as follows. Major role in the synthesis of nucleoside triphosphates other than ATP. The chain is Nucleoside diphosphate kinase B (nme2) from Merluccius bilinearis (Silver hake).